The chain runs to 392 residues: Glutamine synthetase (392 aa).

The region spanning 26-106 is the GS beta-grasp domain; sequence VQVTYVWIDG…VMCEVLKYNR (81 aa). The GS catalytic domain occupies 113–392; the sequence is LRHTCKKIME…MASPRDAAVF (280 aa). Residue E134 participates in ATP binding. E134, E136, E196, and E203 together coordinate Mn(2+). Residue 203–208 participates in ATP binding; sequence EFQVGP. 246–247 is a binding site for L-glutamate; it reads NW. Mn(2+) is bound at residue H253. Residues 255–257, R319, and R324 contribute to the ATP site; that span reads NYS. L-glutamate is bound at residue R319. 336 to 338 contributes to the ADP binding site; the sequence is YFE. E338 is a Mn(2+) binding site. R340 lines the L-glutamate pocket.

It belongs to the glutamine synthetase family. It depends on Mg(2+) as a cofactor. Requires Mn(2+) as cofactor.

It localises to the cytoplasm. It is found in the cytosol. Its subcellular location is the microsome. The protein localises to the mitochondrion. The catalysed reaction is L-glutamate + NH4(+) + ATP = L-glutamine + ADP + phosphate + H(+). Glutamine synthetase that catalyzes the ATP-dependent conversion of glutamate and ammonia to glutamine. The sequence is that of Glutamine synthetase from Xenopus laevis (African clawed frog).